The following is a 421-amino-acid chain: Cyclin-A2 (421 aa).

Met1 carries the N-acetylmethionine modification. A disordered region spans residues 1–60; the sequence is MPGSSRQSGREAGSALLSLQQEDQENVNPEKAAPDQRARAALKTGNARGNAPQQRLKARR. Ser5 carries the phosphoserine modification.

The protein belongs to the cyclin family. Cyclin AB subfamily. As to quaternary structure, interacts with the CDK1 and CDK2 protein kinases to form serine/threonine kinase holoenzyme complexes. Interacts with CDK1 (hyperphosphorylated form in G1 and underphosphorylated forms in S and G2). Interacts with CDK2; the interaction increases from G1 to G2. Interacts (associated with CDK2 but not with CDK1) with SCAPER; regulates the activity of CCNA2/CDK2 by transiently maintaining CCNA2 in the cytoplasm. Forms a ternary complex with CDK2 and CDKN1B; CDKN1B inhibits the kinase activity of CDK2 through conformational rearrangements. Interacts with INCA1. Polyubiquitinated via 'Lys-11'-linked ubiquitin by the anaphase-promoting complex (APC/C), leading to its degradation by the proteasome. Deubiquitinated and stabilized by USP37 enables entry into S phase. Ubiquitinated during the G1 phase by the SCF(FBXO31) complex, leading to its proteasomal degradation.

It is found in the nucleus. The protein resides in the cytoplasm. In terms of biological role, cyclin which controls both the G1/S and the G2/M transition phases of the cell cycle. Functions through the formation of specific serine/threonine kinase holoenzyme complexes with the cyclin-dependent protein kinases CDK1 and CDK2. The cyclin subunit confers the substrate specificity of these complexes and differentially interacts with and activates CDK1 and CDK2 throughout the cell cycle. The sequence is that of Cyclin-A2 from Mesocricetus auratus (Golden hamster).